A 463-amino-acid polypeptide reads, in one-letter code: SH3 domain-binding protein 5 (463 aa).

Basic and acidic residues predominate over residues 1–12 (MDTALKRSRSDE). Positions 1–69 (MDTALKRSRS…DDINRRETEL (69 aa)) are disordered. Residues 25 to 44 (EKEEEEERMEQGLEEEEEEV) are compositionally biased toward acidic residues. Residues 33–268 (MEQGLEEEEE…EIHERRRSNA (236 aa)) form a sufficient for interaction with RAB11A and for guanine nucleotide exchange activity region. Residues 45 to 54 (DPRIQGELEK) are compositionally biased toward basic and acidic residues. Coiled coils occupy residues 47–93 (RIQG…LAKK), 100–148 (DSKP…RLLE), 157–203 (AWQE…LEKK), and 214–258 (YFEL…RISD). Residues 309–320 (NCSNLVSEDDSE) are compositionally biased toward acidic residues. The tract at residues 309 to 348 (NCSNLVSEDDSETQSVSSFSSGPTSPSEMPDQFPAVARPG) is disordered. Over residues 323–335 (SVSSFSSGPTSPS) the composition is skewed to low complexity. Residue serine 354 is modified to Phosphoserine; by MAPK12 and MAPK9. The interval 372–429 (SECSGASSPECEVERGDRAEGAENKMSDKANNNRVLGSTNGGSGRSRSQSSTSLESQA) is disordered. Phosphoserine occurs at positions 378 and 379. Residues 383–399 (EVERGDRAEGAENKMSD) are compositionally biased toward basic and acidic residues. The span at 416 to 428 (RSRSQSSTSLESQ) shows a compositional bias: low complexity. Serine 421 and serine 424 each carry phosphoserine.

It belongs to the SH3BP5 family. Interacts with BTK. Interacts with all isoforms of MAPK8, MAPK9, MAPK10 and MAPK12. Interacts with GDP-bound and nucleotide-free forms of RAB11A.

Its subcellular location is the cytoplasmic vesicle membrane. It localises to the mitochondrion. Functionally, functions as a guanine nucleotide exchange factor (GEF) with specificity for RAB11A and RAB25. Inhibits the auto- and transphosphorylation activity of BTK. Plays a negative regulatory role in BTK-related cytoplasmic signaling in B-cells. May be involved in BCR-induced apoptotic cell death. This Mus musculus (Mouse) protein is SH3 domain-binding protein 5 (Sh3bp5).